We begin with the raw amino-acid sequence, 145 residues long: D-aminoacyl-tRNA deacylase (145 aa).

Residues 137–138 carry the Gly-cisPro motif, important for rejection of L-amino acids motif; sequence GP.

Belongs to the DTD family. In terms of assembly, homodimer.

It is found in the cytoplasm. It carries out the reaction glycyl-tRNA(Ala) + H2O = tRNA(Ala) + glycine + H(+). The catalysed reaction is a D-aminoacyl-tRNA + H2O = a tRNA + a D-alpha-amino acid + H(+). In terms of biological role, an aminoacyl-tRNA editing enzyme that deacylates mischarged D-aminoacyl-tRNAs. Also deacylates mischarged glycyl-tRNA(Ala), protecting cells against glycine mischarging by AlaRS. Acts via tRNA-based rather than protein-based catalysis; rejects L-amino acids rather than detecting D-amino acids in the active site. By recycling D-aminoacyl-tRNA to D-amino acids and free tRNA molecules, this enzyme counteracts the toxicity associated with the formation of D-aminoacyl-tRNA entities in vivo and helps enforce protein L-homochirality. This Chromohalobacter salexigens (strain ATCC BAA-138 / DSM 3043 / CIP 106854 / NCIMB 13768 / 1H11) protein is D-aminoacyl-tRNA deacylase.